Here is a 31-residue protein sequence, read N- to C-terminus: Cytochrome b6-f complex subunit 6 (31 aa).

A helical membrane pass occupies residues 4 to 24 (LLSYFAFLMLALTFTLALFVG).

This sequence belongs to the PetL family. The 4 large subunits of the cytochrome b6-f complex are cytochrome b6, subunit IV (17 kDa polypeptide, PetD), cytochrome f and the Rieske protein, while the 4 small subunits are PetG, PetL, PetM and PetN. The complex functions as a dimer.

It is found in the plastid. It localises to the chloroplast thylakoid membrane. In terms of biological role, component of the cytochrome b6-f complex, which mediates electron transfer between photosystem II (PSII) and photosystem I (PSI), cyclic electron flow around PSI, and state transitions. PetL is important for photoautotrophic growth as well as for electron transfer efficiency and stability of the cytochrome b6-f complex. This Adiantum capillus-veneris (Maidenhair fern) protein is Cytochrome b6-f complex subunit 6.